Reading from the N-terminus, the 513-residue chain is Tryptophan--tRNA ligase 1 (513 aa).

The short motif at 86 to 94 (PTGDPHIGH) is the 'HIGH' region element. Positions 393–397 (KMSSS) match the 'KMSKS' region motif.

It belongs to the class-I aminoacyl-tRNA synthetase family.

It localises to the cytoplasm. It carries out the reaction tRNA(Trp) + L-tryptophan + ATP = L-tryptophyl-tRNA(Trp) + AMP + diphosphate + H(+). This Halobacterium salinarum (strain ATCC 700922 / JCM 11081 / NRC-1) (Halobacterium halobium) protein is Tryptophan--tRNA ligase 1.